A 349-amino-acid chain; its full sequence is tRNA pseudouridine synthase D (349 aa).

Phe27 contacts substrate. The Nucleophile role is filled by Asp80. Residue Asn129 participates in substrate binding. One can recognise a TRUD domain in the interval 155 to 303 (GVPNYFGAQR…VEASRRAMLL (149 aa)). Phe329 contributes to the substrate binding site.

This sequence belongs to the pseudouridine synthase TruD family.

The enzyme catalyses uridine(13) in tRNA = pseudouridine(13) in tRNA. Its function is as follows. Responsible for synthesis of pseudouridine from uracil-13 in transfer RNAs. The protein is tRNA pseudouridine synthase D of Salmonella choleraesuis (strain SC-B67).